Reading from the N-terminus, the 913-residue chain is Alanine--tRNA ligase (913 aa).

Zn(2+) contacts are provided by histidine 608, histidine 612, cysteine 711, and histidine 715.

This sequence belongs to the class-II aminoacyl-tRNA synthetase family. Zn(2+) serves as cofactor.

The protein localises to the cytoplasm. It catalyses the reaction tRNA(Ala) + L-alanine + ATP = L-alanyl-tRNA(Ala) + AMP + diphosphate. In terms of biological role, catalyzes the attachment of alanine to tRNA(Ala) in a two-step reaction: alanine is first activated by ATP to form Ala-AMP and then transferred to the acceptor end of tRNA(Ala). Also edits incorrectly charged Ser-tRNA(Ala) and Gly-tRNA(Ala) via its editing domain. In Methanocorpusculum labreanum (strain ATCC 43576 / DSM 4855 / Z), this protein is Alanine--tRNA ligase.